We begin with the raw amino-acid sequence, 151 residues long: Ubiquitin-conjugating enzyme E2 W (151 aa).

The region spanning 3–151 (SMQKRLQKEL…TKWWYHDDTC (149 aa)) is the UBC core domain. Cysteine 91 serves as the catalytic Glycyl thioester intermediate.

Belongs to the ubiquitin-conjugating enzyme family.

The protein localises to the nucleus. It catalyses the reaction S-ubiquitinyl-[E1 ubiquitin-activating enzyme]-L-cysteine + [E2 ubiquitin-conjugating enzyme]-L-cysteine = [E1 ubiquitin-activating enzyme]-L-cysteine + S-ubiquitinyl-[E2 ubiquitin-conjugating enzyme]-L-cysteine.. The enzyme catalyses S-ubiquitinyl-[E1 ubiquitin-activating enzyme]-L-cysteine + [acceptor protein]-N-terminal-amino acid = [E1 ubiquitin-activating enzyme]-L-cysteine + N-terminal-ubiquitinyl-[acceptor protein].. It functions in the pathway protein modification; protein ubiquitination. Functionally, accepts ubiquitin from the E1 complex and catalyzes its covalent attachment to other proteins. Catalyzes monoubiquitination. Involved in degradation of misfolded chaperone substrate and DNA repair. In Xenopus tropicalis (Western clawed frog), this protein is Ubiquitin-conjugating enzyme E2 W (ube2w).